Here is a 262-residue protein sequence, read N- to C-terminus: Polyamine aminopropyltransferase (262 aa).

Residues 1-249 (MWITQEITPY…DIHRAAFALP (249 aa)) form the PABS domain. Asn-29 contributes to the S-methyl-5'-thioadenosine binding site. Residue Asp-83 coordinates spermidine. Asp-155 functions as the Proton acceptor in the catalytic mechanism.

Belongs to the spermidine/spermine synthase family. In terms of assembly, homodimer or homotetramer.

The protein localises to the cytoplasm. The catalysed reaction is S-adenosyl 3-(methylsulfanyl)propylamine + putrescine = S-methyl-5'-thioadenosine + spermidine + H(+). It functions in the pathway amine and polyamine biosynthesis; spermidine biosynthesis; spermidine from putrescine: step 1/1. In terms of biological role, catalyzes the irreversible transfer of a propylamine group from the amino donor S-adenosylmethioninamine (decarboxy-AdoMet) to putrescine (1,4-diaminobutane) to yield spermidine. The sequence is that of Polyamine aminopropyltransferase from Helicobacter pylori (strain G27).